We begin with the raw amino-acid sequence, 269 residues long: MPELPEVETSRRGIEPHLVGATILHAVVRNGRLRWPVSEEIYRLSDQPVLSVQRRAKYLLLELPEGWIIIHLGMSGSLRILPEELPPEKHDHVELVMSNGKVLRYTDPRRFGAWLWTKELEGHNVLTHLGPEPLSDDFNGEYLHQKCAKKKTAIKPWLMDNKLVVGVGNIYASESLFAAGIHPDRLASSLSLAECELLARVIKAVLLRSIEQGGTTLKDFLQSDGKPGYFAQELQVYGRKGEPCRVCGTPIVATKHAQRATFYCRQCQK.

The active-site Schiff-base intermediate with DNA is the Pro2. Residue Glu3 is the Proton donor of the active site. Lys57 (proton donor; for beta-elimination activity) is an active-site residue. Positions 90, 109, and 150 each coordinate DNA. Residues 235 to 269 (QVYGRKGEPCRVCGTPIVATKHAQRATFYCRQCQK) form an FPG-type zinc finger. The active-site Proton donor; for delta-elimination activity is the Arg259.

It belongs to the FPG family. As to quaternary structure, monomer. Zn(2+) is required as a cofactor.

The enzyme catalyses Hydrolysis of DNA containing ring-opened 7-methylguanine residues, releasing 2,6-diamino-4-hydroxy-5-(N-methyl)formamidopyrimidine.. It carries out the reaction 2'-deoxyribonucleotide-(2'-deoxyribose 5'-phosphate)-2'-deoxyribonucleotide-DNA = a 3'-end 2'-deoxyribonucleotide-(2,3-dehydro-2,3-deoxyribose 5'-phosphate)-DNA + a 5'-end 5'-phospho-2'-deoxyribonucleoside-DNA + H(+). Involved in base excision repair of DNA damaged by oxidation or by mutagenic agents. Acts as a DNA glycosylase that recognizes and removes damaged bases. Has a preference for oxidized purines, such as 7,8-dihydro-8-oxoguanine (8-oxoG). Has AP (apurinic/apyrimidinic) lyase activity and introduces nicks in the DNA strand. Cleaves the DNA backbone by beta-delta elimination to generate a single-strand break at the site of the removed base with both 3'- and 5'-phosphates. The protein is Formamidopyrimidine-DNA glycosylase of Escherichia coli (strain 55989 / EAEC).